Reading from the N-terminus, the 536-residue chain is Indolin-2-one monooxygenase (536 aa).

A helical transmembrane segment spans residues 18 to 34; the sequence is GTATHALLLGVLIFLVI. Residue cysteine 480 participates in heme binding.

The protein belongs to the cytochrome P450 family. Requires heme as cofactor.

It is found in the membrane. The catalysed reaction is indolin-2-one + reduced [NADPH--hemoprotein reductase] + O2 = 3-hydroxyindolin-2-one + oxidized [NADPH--hemoprotein reductase] + H2O + H(+). It functions in the pathway secondary metabolite biosynthesis; 2,4-dihydroxy-1,4-benzoxazin-3-one biosynthesis; 2,4-dihydroxy-1,4-benzoxazin-3-one from indoleglycerol phosphate: step 3/5. In terms of biological role, catalyzes the conversion of indolin-2-one to 3-hydroxyindolin-2-one. In Zea mays (Maize), this protein is Indolin-2-one monooxygenase (CYP71C2).